The following is a 522-amino-acid chain: Lysophospholipid acyltransferase LPCAT4 (522 aa).

Helical transmembrane passes span 43–63 (ILGF…LFLM) and 92–112 (HLIY…WITI). The short motif at 130–135 (HSTFFD) is the HXXXXD motif element. 2 N-linked (GlcNAc...) asparagine glycosylation sites follow: Asn166 and Asn517. The segment at 496–522 (GRRKPPHIQQNGGCSGKNNPRNQSKMD) is disordered. Residues 503–522 (IQQNGGCSGKNNPRNQSKMD) are compositionally biased toward polar residues.

The protein belongs to the 1-acyl-sn-glycerol-3-phosphate acyltransferase family.

It localises to the endoplasmic reticulum membrane. It catalyses the reaction a 1-acyl-sn-glycero-3-phosphoethanolamine + an acyl-CoA = a 1,2-diacyl-sn-glycero-3-phosphoethanolamine + CoA. The catalysed reaction is a 1-O-(1Z-alkenyl)-sn-glycero-3-phosphoethanolamine + an acyl-CoA = a 1-O-(1Z-alkenyl)-2-acyl-sn-glycero-3-phosphoethanolamine + CoA. The enzyme catalyses a 1-acyl-sn-glycero-3-phosphocholine + an acyl-CoA = a 1,2-diacyl-sn-glycero-3-phosphocholine + CoA. It carries out the reaction a 1-O-alkyl-sn-glycero-3-phosphocholine + acetyl-CoA = a 1-O-alkyl-2-acetyl-sn-glycero-3-phosphocholine + CoA. It catalyses the reaction a 1-acyl-sn-glycero-3-phospho-L-serine + an acyl-CoA = a 1,2-diacyl-sn-glycero-3-phospho-L-serine + CoA. It functions in the pathway lipid metabolism; phospholipid metabolism. Displays acyl-CoA-dependent lysophospholipid acyltransferase activity with a subset of lysophospholipids as substrates. Prefers long chain acyl-CoAs (C16, C18) as acyl donors. This chain is Lysophospholipid acyltransferase LPCAT4 (lpcat4), found in Xenopus tropicalis (Western clawed frog).